Consider the following 84-residue polypeptide: Large ribosomal subunit protein bL27 (84 aa).

The interval 1-22 (MAHKKAGGSTRNGRDSESKRLG) is disordered.

Belongs to the bacterial ribosomal protein bL27 family.

The sequence is that of Large ribosomal subunit protein bL27 from Shewanella sp. (strain MR-4).